The following is a 210-amino-acid chain: Synaptosomal-associated protein 25 (210 aa).

The disordered stretch occupies residues 1-23 (MENSVENSMDPRSEQEEMQRCAD). Over residues 9-20 (MDPRSEQEEMQR) the composition is skewed to basic and acidic residues. T-SNARE coiled-coil homology domains lie at 23–85 (DQIT…LSDL) and 147–209 (DARE…ATKM).

This sequence belongs to the SNAP-25 family.

The protein localises to the synapse. The protein resides in the synaptosome. Its subcellular location is the cell membrane. In terms of biological role, may play an important role in the synaptic function of specific neuronal systems. Associates with proteins involved in vesicle docking and membrane fusion. The polypeptide is Synaptosomal-associated protein 25 (snap25) (Torpedo marmorata (Marbled electric ray)).